A 297-amino-acid polypeptide reads, in one-letter code: Inosose dehydratase (297 aa).

Belongs to the IolE/MocC family. It depends on glutathione as a cofactor. Co(2+) serves as cofactor. Mn(2+) is required as a cofactor.

It catalyses the reaction scyllo-inosose = 3D-3,5/4-trihydroxycyclohexane-1,2-dione + H2O. It participates in polyol metabolism; myo-inositol degradation into acetyl-CoA; acetyl-CoA from myo-inositol: step 2/7. In terms of biological role, catalyzes the dehydration of inosose (2-keto-myo-inositol, 2KMI or 2,4,6/3,5-pentahydroxycyclohexanone) to 3D-(3,5/4)-trihydroxycyclohexane-1,2-dione (D-2,3-diketo-4-deoxy-epi-inositol). This is Inosose dehydratase from Clostridium perfringens (strain ATCC 13124 / DSM 756 / JCM 1290 / NCIMB 6125 / NCTC 8237 / Type A).